The following is a 269-amino-acid chain: 4-hydroxy-tetrahydrodipicolinate reductase (269 aa).

Residues 8-13, Glu-34, 98-100, and 122-125 contribute to the NAD(+) site; these read GASGRM, GTT, and APNM. His-155 (proton donor/acceptor) is an active-site residue. His-156 serves as a coordination point for (S)-2,3,4,5-tetrahydrodipicolinate. The active-site Proton donor is Lys-159. Position 165-166 (165-166) interacts with (S)-2,3,4,5-tetrahydrodipicolinate; that stretch reads GT.

Belongs to the DapB family.

Its subcellular location is the cytoplasm. It carries out the reaction (S)-2,3,4,5-tetrahydrodipicolinate + NAD(+) + H2O = (2S,4S)-4-hydroxy-2,3,4,5-tetrahydrodipicolinate + NADH + H(+). The enzyme catalyses (S)-2,3,4,5-tetrahydrodipicolinate + NADP(+) + H2O = (2S,4S)-4-hydroxy-2,3,4,5-tetrahydrodipicolinate + NADPH + H(+). It participates in amino-acid biosynthesis; L-lysine biosynthesis via DAP pathway; (S)-tetrahydrodipicolinate from L-aspartate: step 4/4. Functionally, catalyzes the conversion of 4-hydroxy-tetrahydrodipicolinate (HTPA) to tetrahydrodipicolinate. This is 4-hydroxy-tetrahydrodipicolinate reductase from Desulfotalea psychrophila (strain LSv54 / DSM 12343).